A 131-amino-acid chain; its full sequence is Ribonuclease VapC30 (131 aa).

The PINc domain maps to 1–129 (MVIDTSALVA…FQHTDIATVA (129 aa)). The Mg(2+) site is built by aspartate 4 and aspartate 99.

Belongs to the PINc/VapC protein family. Mg(2+) is required as a cofactor.

Toxic component of a type II toxin-antitoxin (TA) system. An RNase. Its toxic effect is neutralized by coexpression with cognate antitoxin VapB30. The chain is Ribonuclease VapC30 from Mycobacterium tuberculosis (strain CDC 1551 / Oshkosh).